A 374-amino-acid chain; its full sequence is tRNA-specific 2-thiouridylase MnmA (374 aa).

Residues 15 to 22 (GMSGGVDS) and Met-41 contribute to the ATP site. The interval 101 to 103 (NPD) is interaction with target base in tRNA. Residue Cys-106 is the Nucleophile of the active site. A disulfide bridge connects residues Cys-106 and Cys-206. Gly-130 provides a ligand contact to ATP. Residues 156 to 158 (KDQ) form an interaction with tRNA region. The Cysteine persulfide intermediate role is filled by Cys-206. The segment at 324–325 (RY) is interaction with tRNA.

This sequence belongs to the MnmA/TRMU family.

It localises to the cytoplasm. It carries out the reaction S-sulfanyl-L-cysteinyl-[protein] + uridine(34) in tRNA + AH2 + ATP = 2-thiouridine(34) in tRNA + L-cysteinyl-[protein] + A + AMP + diphosphate + H(+). Functionally, catalyzes the 2-thiolation of uridine at the wobble position (U34) of tRNA, leading to the formation of s(2)U34. This is tRNA-specific 2-thiouridylase MnmA from Aromatoleum aromaticum (strain DSM 19018 / LMG 30748 / EbN1) (Azoarcus sp. (strain EbN1)).